The chain runs to 103 residues: Large ribosomal subunit protein uL24 (103 aa).

This sequence belongs to the universal ribosomal protein uL24 family. In terms of assembly, part of the 50S ribosomal subunit.

Its function is as follows. One of two assembly initiator proteins, it binds directly to the 5'-end of the 23S rRNA, where it nucleates assembly of the 50S subunit. One of the proteins that surrounds the polypeptide exit tunnel on the outside of the subunit. This Corynebacterium urealyticum (strain ATCC 43042 / DSM 7109) protein is Large ribosomal subunit protein uL24.